The primary structure comprises 194 residues: MPNWGGGAKCGACEKTVYHAEEIQCNGRSFHKTCFHCMACRKALDSTTVAAHESEIYCKVCYGRRYGPKGIGYGQGAGCLSTDTGEHLGLQFQQSPKQARSATTSSNPSKFAKFGESEKCPRCGKSVYAAEKVMGGGKPWHKTCFRCAICGKSLESTNVTDKDGELYCKVCYAKNFGPTGIGFGGLTHQVEKKD.

An interaction with TCAP region spans residues 1 to 5 (MPNWG). Residues 10–61 (CGACEKTVYHAEEIQCNGRSFHKTCFHCMACRKALDSTTVAAHESEIYCKVC) enclose the LIM zinc-binding 1 domain. Positions 64 to 69 (RRYGPK) match the Nuclear localization signal motif. The segment at 94-106 (QSPKQARSATTSS) is interaction with CLF2. Residues Ser-95 and Ser-153 each carry the phosphoserine modification. The 52-residue stretch at 120–171 (CPRCGKSVYAAEKVMGGGKPWHKTCFRCAICGKSLESTNVTDKDGELYCKVC) folds into the LIM zinc-binding 2 domain.

In terms of assembly, self-associates. Oligomeric in the cytoplasm and monomeric in the nucleus. Homooligomers preferentially form along the actin cytoskeleton. Interacts with TCAP, LDHD, MYOD1, MYOG, ACTN2, NRAP, MYF6. Interacts (via N-terminus) with GLRX3 (via C-terminus) and PPP3CA; GLRX3 and calcineurin compete for interaction with CSRP3. Interacts with CFL2; the stoichiometry influences F-actin depolymerization and possibly two molecules of CFL2 can interact with one molecule of CSRP3 resulting in the highest functional impact; the interaction is stronger with phosphorylated CFL2.

It localises to the nucleus. It is found in the cytoplasm. Its subcellular location is the cytoskeleton. The protein resides in the myofibril. The protein localises to the sarcomere. It localises to the z line. Functionally, positive regulator of myogenesis. Acts as a cofactor for myogenic bHLH transcription factors such as MYOD1, and probably MYOG and MYF6. Enhances the DNA-binding activity of the MYOD1:TCF3 isoform E47 complex and may promote formation of a functional MYOD1:TCF3 isoform E47:MEF2A complex involved in myogenesis. Plays a crucial and specific role in the organization of cytosolic structures in cardiomyocytes. Could play a role in mechanical stretch sensing. May be a scaffold protein that promotes the assembly of interacting proteins at Z-line structures. It is essential for calcineurin anchorage to the Z line. Required for stress-induced calcineurin-NFAT activation. The role in regulation of cytoskeleton dynamics by association with CFL2 is reported conflictingly. Proposed to contribute to the maintenance of muscle cell integrity through an actin-based mechanism. Can directly bind to actin filaments, cross-link actin filaments into bundles without polarity selectivity and protect them from dilution- and cofilin-mediated depolymerization; the function seems to involve its self-association. In vitro can inhibit PKC/PRKCA activity. Proposed to be involved in cardiac stress signaling by down-regulating excessive PKC/PRKCA signaling. This is Cysteine and glycine-rich protein 3 (CSRP3) from Bos taurus (Bovine).